The sequence spans 170 residues: IMPACT family member YDL177C (170 aa).

Residues 79-98 (KKKGNKANKSNNSHVNKSRN) form a disordered region.

Belongs to the IMPACT family.

The sequence is that of IMPACT family member YDL177C from Saccharomyces cerevisiae (strain ATCC 204508 / S288c) (Baker's yeast).